The sequence spans 201 residues: Ribosome maturation factor RimP (201 aa).

It belongs to the RimP family.

Its subcellular location is the cytoplasm. Required for maturation of 30S ribosomal subunits. This chain is Ribosome maturation factor RimP, found in Acidiphilium cryptum (strain JF-5).